The following is a 290-amino-acid chain: Probable porphobilinogen deaminase (290 aa).

An S-(dipyrrolylmethanemethyl)cysteine modification is found at cysteine 230.

This sequence belongs to the HMBS family. Dipyrromethane is required as a cofactor.

It catalyses the reaction 4 porphobilinogen + H2O = hydroxymethylbilane + 4 NH4(+). Its pathway is porphyrin-containing compound metabolism; protoporphyrin-IX biosynthesis; coproporphyrinogen-III from 5-aminolevulinate: step 2/4. In terms of biological role, tetrapolymerization of the monopyrrole PBG into the hydroxymethylbilane pre-uroporphyrinogen in several discrete steps. This is Probable porphobilinogen deaminase from Metallosphaera sedula (strain ATCC 51363 / DSM 5348 / JCM 9185 / NBRC 15509 / TH2).